We begin with the raw amino-acid sequence, 111 residues long: Large ribosomal subunit protein eL42 (111 aa).

The Zn(2+) site is built by Cys-12, Cys-15, Cys-72, and Cys-77.

Belongs to the eukaryotic ribosomal protein eL42 family. In terms of assembly, component of the large ribosomal subunit.

Its subcellular location is the cytoplasm. In terms of biological role, component of the large ribosomal subunit. The ribosome is a large ribonucleoprotein complex responsible for the synthesis of proteins in the cell. This is Large ribosomal subunit protein eL42 (RPL36A) from Oryctolagus cuniculus (Rabbit).